An 85-amino-acid chain; its full sequence is Large ribosomal subunit protein bL27 (85 aa).

Residues 1 to 22 (MAHKKAGGSTRNGRDSESKRLG) are disordered.

The protein belongs to the bacterial ribosomal protein bL27 family.

This Marinomonas sp. (strain MWYL1) protein is Large ribosomal subunit protein bL27.